The following is a 205-amino-acid chain: Cytochrome c oxidase subunit 3 (205 aa).

The next 5 helical transmembrane spans lie at 28 to 48 (GTIV…AMYF), 72 to 92 (ALVI…GVFA), 104 to 124 (WFSL…YEYF), 142 to 162 (FFIT…AFVV), and 184 to 204 (SYYW…IYFI).

This sequence belongs to the cytochrome c oxidase subunit 3 family. Associates with subunits I, II and IV to form cytochrome c oxidase.

It is found in the cell membrane. The enzyme catalyses 4 Fe(II)-[cytochrome c] + O2 + 8 H(+)(in) = 4 Fe(III)-[cytochrome c] + 2 H2O + 4 H(+)(out). In Corynebacterium diphtheriae (strain ATCC 700971 / NCTC 13129 / Biotype gravis), this protein is Cytochrome c oxidase subunit 3 (ctaE).